Consider the following 111-residue polypeptide: UPF0145 protein Bphy_3680 (111 aa).

The protein belongs to the UPF0145 family.

In Paraburkholderia phymatum (strain DSM 17167 / CIP 108236 / LMG 21445 / STM815) (Burkholderia phymatum), this protein is UPF0145 protein Bphy_3680.